The following is a 436-amino-acid chain: Trigger factor (436 aa).

One can recognise a PPIase FKBP-type domain in the interval 163–248 (GDTVNIDFDG…VNEIKYKDVP (86 aa)).

It belongs to the FKBP-type PPIase family. Tig subfamily.

The protein resides in the cytoplasm. It carries out the reaction [protein]-peptidylproline (omega=180) = [protein]-peptidylproline (omega=0). Involved in protein export. Acts as a chaperone by maintaining the newly synthesized protein in an open conformation. Functions as a peptidyl-prolyl cis-trans isomerase. The polypeptide is Trigger factor (Staphylococcus saprophyticus subsp. saprophyticus (strain ATCC 15305 / DSM 20229 / NCIMB 8711 / NCTC 7292 / S-41)).